The chain runs to 470 residues: Nitric oxide synthase, inducible (470 aa).

Residues Trp2, Tyr3, and Glu7 each coordinate L-arginine. Residues Arg11, Trp93, and Phe106 each coordinate (6R)-L-erythro-5,6,7,8-tetrahydrobiopterin. Tyr121 is a heme b binding site. The calmodulin-binding stretch occupies residues 145 to 165 (FKAVARAALFSSTLMSRVLAN). The 139-residue stretch at 169 to 307 (CTVLYATETG…AFSAWALTAL (139 aa)) folds into the Flavodoxin-like domain. FMN is bound by residues Thr175, Glu176, Thr177, Lys179, Ser180, Ser221, Thr222, Ser258, Cys265, Glu291, and Gln295. Arg380 contacts NADP(+). His403 contributes to the FAD binding site. Thr440 contacts NADP(+).

This sequence belongs to the NOS family. In terms of assembly, homodimer. Heme b is required as a cofactor. FAD serves as cofactor. It depends on FMN as a cofactor. Requires (6R)-L-erythro-5,6,7,8-tetrahydrobiopterin as cofactor.

It localises to the cytoplasm. It is found in the cytosol. It catalyses the reaction 2 L-arginine + 3 NADPH + 4 O2 + H(+) = 2 L-citrulline + 2 nitric oxide + 3 NADP(+) + 4 H2O. Not stimulated by calcium/calmodulin. Its function is as follows. Produces nitric oxide (NO) which is a messenger molecule with diverse functions throughout the body. In macrophages, NO mediates tumoricidal and bactericidal actions. Also has nitrosylase activity and mediates cysteine S-nitrosylation of cytoplasmic target proteins such COX2. The protein is Nitric oxide synthase, inducible (nos2) of Oncorhynchus mykiss (Rainbow trout).